We begin with the raw amino-acid sequence, 150 residues long: Large ribosomal subunit protein bL9 (150 aa).

The protein belongs to the bacterial ribosomal protein bL9 family.

In terms of biological role, binds to the 23S rRNA. This chain is Large ribosomal subunit protein bL9, found in Methylibium petroleiphilum (strain ATCC BAA-1232 / LMG 22953 / PM1).